A 417-amino-acid polypeptide reads, in one-letter code: Hydroxysqualene dehydroxylase (417 aa).

This sequence belongs to the HpnE family.

It catalyses the reaction squalene + FAD + H2O + H(+) = hydroxysqualene + FADH2. Its pathway is secondary metabolite biosynthesis; hopanoid biosynthesis. In terms of biological role, involved in the biosynthesis of the hopanoid precursor squalene (SQ) from farnesyl diphosphate (FPP). Catalyzes the third (last) step, the reduction of hydroxysqualene (HSQ) to SQ. This Sinorhizobium fredii (strain NBRC 101917 / NGR234) protein is Hydroxysqualene dehydroxylase.